Here is a 342-residue protein sequence, read N- to C-terminus: HTH-type transcriptional regulator GbpR (342 aa).

The 58-residue stretch at 16–73 (LKLRHLQLFVALDEHRNLHRAAASLTMSQPAASKLLGDLEESLGVTLFERHGRGVEPN) folds into the HTH lysR-type domain. Positions 33–52 (LHRAAASLTMSQPAASKLLG) form a DNA-binding region, H-T-H motif.

This sequence belongs to the LysR transcriptional regulatory family.

Its function is as follows. Does not seem to be required for sbpA expression. This Azospirillum brasilense protein is HTH-type transcriptional regulator GbpR (gbpR).